Reading from the N-terminus, the 450-residue chain is Aspartyl/glutamyl-tRNA(Asn/Gln) amidotransferase subunit B (450 aa).

Belongs to the GatB/GatE family. GatB subfamily. Heterotrimer of A, B and C subunits.

The enzyme catalyses L-glutamyl-tRNA(Gln) + L-glutamine + ATP + H2O = L-glutaminyl-tRNA(Gln) + L-glutamate + ADP + phosphate + H(+). It catalyses the reaction L-aspartyl-tRNA(Asn) + L-glutamine + ATP + H2O = L-asparaginyl-tRNA(Asn) + L-glutamate + ADP + phosphate + 2 H(+). In terms of biological role, allows the formation of correctly charged Asn-tRNA(Asn) or Gln-tRNA(Gln) through the transamidation of misacylated Asp-tRNA(Asn) or Glu-tRNA(Gln) in organisms which lack either or both of asparaginyl-tRNA or glutaminyl-tRNA synthetases. The reaction takes place in the presence of glutamine and ATP through an activated phospho-Asp-tRNA(Asn) or phospho-Glu-tRNA(Gln). The sequence is that of Aspartyl/glutamyl-tRNA(Asn/Gln) amidotransferase subunit B from Methanobrevibacter smithii (strain ATCC 35061 / DSM 861 / OCM 144 / PS).